The chain runs to 282 residues: Ubiquinone biosynthesis protein COQ4 homolog, mitochondrial (282 aa).

A mitochondrion-targeting transit peptide spans 1–30 (MFVRKSCYSLINATRRCLRYRQLSSTTAGT). 4 residues coordinate Zn(2+): His186, Asp187, His190, and Glu202.

Belongs to the COQ4 family. Component of a multi-subunit COQ enzyme complex. It depends on Zn(2+) as a cofactor.

Its subcellular location is the mitochondrion inner membrane. It carries out the reaction a 4-hydroxy-3-methoxy-5-(all-trans-polyprenyl)benzoate + H(+) = a 2-methoxy-6-(all-trans-polyprenyl)phenol + CO2. It functions in the pathway cofactor biosynthesis; ubiquinone biosynthesis. Lyase that catalyzes the C1-decarboxylation of 4-hydroxy-3-methoxy-5-(all-trans-polyprenyl)benzoic acid into 2-methoxy-6-(all-trans-polyprenyl)phenol during ubiquinone biosynthesis. The protein is Ubiquinone biosynthesis protein COQ4 homolog, mitochondrial of Anopheles gambiae (African malaria mosquito).